Here is a 2092-residue protein sequence, read N- to C-terminus: Nonribosomal peptide synthetase echPS (2092 aa).

The segment at 13-406 (FSQRCCQNPD…GRRDRVTKIR (394 aa)) is adenylation 1. The Carrier 1 domain occupies 524–600 (SGPLTIGQAI…SLIEKSRHET (77 aa)). At Ser-561 the chain carries O-(pantetheine 4'-phosphoryl)serine. The tract at residues 596 to 626 (SRHETEDTPDSSAFATRTPEESSMPTQGPVT) is disordered. Residues 605–624 (DSSAFATRTPEESSMPTQGP) show a composition bias toward polar residues. Positions 624 to 1017 (PVTPLQKRMV…YTSLLDAFLD (394 aa)) are condensation 1. Residues 1068–1446 (ASLYPTHVAV…GRKDRQVKVR (379 aa)) form an adenylation 2 region. A Carrier 2 domain is found at 1544 to 1622 (IKTTHLEKLI…DLVILVAQQQ (79 aa)). At Ser-1582 the chain carries O-(pantetheine 4'-phosphoryl)serine. The interval 1663–2047 (SQSQSTFNVS…EALLLECFRI (385 aa)) is condensation 2.

It belongs to the NRP synthetase family. It depends on pantetheine 4'-phosphate as a cofactor.

It catalyses the reaction L-tryptophan + L-alanine + 2 ATP = cyclo(L-tryptophyl-L-alanyl) + 2 ADP + 2 phosphate + 2 H(+). The protein operates within secondary metabolite biosynthesis. It participates in alkaloid biosynthesis. Functionally, nonribosomal peptide synthetase; part of the gene cluster that mediates the biosynthesis of echinulin family alkaloid. The pathway begins with the biosynthesis of the cyclic dipeptide cyclo-L-Trp-L-Ala (cyclo-TA) by the NRPS echPS via condensation of L-alanine and L-tryptophan. The prenyltransferase echPT1 then catalyzes the first prenylation step, a reverse prenylation reaction at C2, to yield preechinulin. Preechinulin is the substrate of the cytochrome P450 monooxygenase echP450 that catalyzes the formation of the double bond between C10 and C11 to produce neoechulin A. The unique prenyltransferase echPT2 functions as a competitive enzyme with echP450 for preechinulin metabolization and uses preechinulin for effective regiospecific prenylations. Preechinulin is prenylated by echPT2 at C5 or C7. C7-prenylation leads to accumulation of tardioxopiperazine B without further modification by echPT2. In contrast, the C5-prenylated tardioxopiperazine A can be prenylated again by echPT2, predominantly at C7 to form echinulin or less frequently at C4 to give variecolorin L. EchPT2 also accepts neoechilunin A to produce varlecolorin G (prenylation at C5) or isoechinulin A (prenylation at C7). EchPT2 further converts isoechinulin A into dehydroechinulin. Moreover, a yet unidentified enzyme can also convert neoechilunin A into neoechilunin B by introducing a double bond between positions C14 and C17 and thus provides a further substrate to echPT2 for C5 and C7 prenylation. The protein is Nonribosomal peptide synthetase echPS of Aspergillus ruber (strain CBS 135680).